A 261-amino-acid chain; its full sequence is Glutamate racemase (261 aa).

Residues 12-13 (DS) and 44-45 (YG) contribute to the substrate site. Catalysis depends on C76, which acts as the Proton donor/acceptor. Residue 77–78 (NT) coordinates substrate. Catalysis depends on C180, which acts as the Proton donor/acceptor. 181–182 (TH) is a binding site for substrate.

The protein belongs to the aspartate/glutamate racemases family.

The enzyme catalyses L-glutamate = D-glutamate. The protein operates within cell wall biogenesis; peptidoglycan biosynthesis. Provides the (R)-glutamate required for cell wall biosynthesis. This Borreliella burgdorferi (strain ATCC 35210 / DSM 4680 / CIP 102532 / B31) (Borrelia burgdorferi) protein is Glutamate racemase.